The chain runs to 250 residues: 2,5-dichloro-2,5-cyclohexadiene-1,4-diol dehydrogenase (250 aa).

9 to 34 (IIVTGGGSGIGRATVELLVASGANVA) lines the NAD(+) pocket. Ser141 is a substrate binding site. Catalysis depends on Tyr154, which acts as the Proton acceptor.

This sequence belongs to the short-chain dehydrogenases/reductases (SDR) family.

The enzyme catalyses 2,5-dichlorocyclohexa-2,5-dien-1,4-diol + NAD(+) = 2,5-dichlorohydroquinone + NADH + H(+). It participates in xenobiotic degradation; gamma-hexachlorocyclohexane degradation. In terms of biological role, catalyzes the dehydrogenation of 2,5-dichloro-2,5-cyclohexadiene-1,4-diol (2,5-DDOL) to 2,5-dichlorohydroquinone (2,5-DCHQ), a step in the degradation of gamma-hexachlorocyclohexane (gamma-HCH or lindane). Has an essential role in this assimilation pathway that allows S.japonicum UT26 to grow on gamma-HCH as the sole source of carbon and energy. The sequence is that of 2,5-dichloro-2,5-cyclohexadiene-1,4-diol dehydrogenase from Sphingobium indicum (strain DSM 16413 / CCM 7287 / MTCC 6362 / UT26 / NBRC 101211 / UT26S) (Sphingobium japonicum).